We begin with the raw amino-acid sequence, 541 residues long: Alpha-zingiberene synthase (541 aa).

Mg(2+) is bound by residues Asp-296, Asp-300, Asp-437, Thr-441, and Glu-445. The DDXXD motif motif lies at 296-300 (DDIYD).

The protein belongs to the terpene synthase family. The cofactor is Mg(2+). Mn(2+) is required as a cofactor.

The enzyme catalyses (2E,6E)-farnesyl diphosphate = alpha-zingiberene + diphosphate. The protein operates within secondary metabolite biosynthesis; terpenoid biosynthesis. Functionally, sesquiterpene synthase that catalyzes the formation of alpha-zingiberene and other sesquiterpenes from trans,trans-farnesyl diphosphate (FPP). May have an additional monoterpene synthase activity. This Ocimum basilicum (Sweet basil) protein is Alpha-zingiberene synthase (ZIS).